A 405-amino-acid chain; its full sequence is Cysteine desulfurase IscS (405 aa).

Pyridoxal 5'-phosphate is bound at residue Asn156. At Lys207 the chain carries N6-(pyridoxal phosphate)lysine. Catalysis depends on Cys329, which acts as the Cysteine persulfide intermediate. Cys329 contributes to the [2Fe-2S] cluster binding site.

It belongs to the class-V pyridoxal-phosphate-dependent aminotransferase family. NifS/IscS subfamily. As to quaternary structure, homodimer. Forms a heterotetramer with IscU, interacts with other sulfur acceptors. It depends on pyridoxal 5'-phosphate as a cofactor.

It localises to the cytoplasm. The catalysed reaction is (sulfur carrier)-H + L-cysteine = (sulfur carrier)-SH + L-alanine. It functions in the pathway cofactor biosynthesis; iron-sulfur cluster biosynthesis. In terms of biological role, master enzyme that delivers sulfur to a number of partners involved in Fe-S cluster assembly, tRNA modification or cofactor biosynthesis. Catalyzes the removal of elemental sulfur atoms from cysteine to produce alanine. Functions as a sulfur delivery protein for Fe-S cluster synthesis onto IscU, an Fe-S scaffold assembly protein, as well as other S acceptor proteins. In Dechloromonas aromatica (strain RCB), this protein is Cysteine desulfurase IscS.